Here is a 45-residue protein sequence, read N- to C-terminus: Pseudo-hevein (45 aa).

One can recognise a Chitin-binding type-1 domain in the interval 1 to 43 (EQCGRQAGGKLCPNNLCCSQYGWCGSSDDYCSPSKNCQSNCKG). 4 disulfides stabilise this stretch: C3–C18, C12–C24, C17–C31, and C37–C41.

N-acetyl-D-glucosamine / N-acetyl-D-neuraminic acid binding lectin. Can inhibit fungal growth. This is Pseudo-hevein from Hevea brasiliensis (Para rubber tree).